The following is a 143-amino-acid chain: Large ribosomal subunit protein uL16c (143 aa).

This sequence belongs to the universal ribosomal protein uL16 family. As to quaternary structure, part of the 50S ribosomal subunit.

Its subcellular location is the plastid. The protein localises to the chloroplast. This chain is Large ribosomal subunit protein uL16c, found in Cyanidioschyzon merolae (strain NIES-3377 / 10D) (Unicellular red alga).